A 175-amino-acid polypeptide reads, in one-letter code: MSQALTLARPYGRAAFAIAREGGTFAPWSDALAFSAQVAGDPRVAALLLNPALGQEQAVTLLAPPQAGEDYLRFLGVLADAQRLSLLPEVAGLYEHLRAEAEHVVKATVTSAAAMSQTELDTIAAALKKRFGRDVDITTAVDASLIGGAVIDTGDVVIDGSLKGKLARLQSSLAH.

Belongs to the ATPase delta chain family. In terms of assembly, F-type ATPases have 2 components, F(1) - the catalytic core - and F(0) - the membrane proton channel. F(1) has five subunits: alpha(3), beta(3), gamma(1), delta(1), epsilon(1). F(0) has three main subunits: a(1), b(2) and c(10-14). The alpha and beta chains form an alternating ring which encloses part of the gamma chain. F(1) is attached to F(0) by a central stalk formed by the gamma and epsilon chains, while a peripheral stalk is formed by the delta and b chains.

The protein localises to the cell inner membrane. In terms of biological role, f(1)F(0) ATP synthase produces ATP from ADP in the presence of a proton or sodium gradient. F-type ATPases consist of two structural domains, F(1) containing the extramembraneous catalytic core and F(0) containing the membrane proton channel, linked together by a central stalk and a peripheral stalk. During catalysis, ATP synthesis in the catalytic domain of F(1) is coupled via a rotary mechanism of the central stalk subunits to proton translocation. This protein is part of the stalk that links CF(0) to CF(1). It either transmits conformational changes from CF(0) to CF(1) or is implicated in proton conduction. The sequence is that of ATP synthase subunit delta from Xanthomonas oryzae pv. oryzae (strain MAFF 311018).